The sequence spans 447 residues: Tubulin beta-2 chain (447 aa).

8 residues coordinate GTP: Q11, E69, S138, G142, T143, G144, N204, and N226. E69 contributes to the Mg(2+) binding site. Polar residues predominate over residues 419–428 (VSEYQQYQDA). The interval 419–447 (VSEYQQYQDATSDEEGEYEDEDQEPEEDM) is disordered. Acidic residues predominate over residues 429–447 (TSDEEGEYEDEDQEPEEDM).

The protein belongs to the tubulin family. As to quaternary structure, dimer of alpha and beta chains. A typical microtubule is a hollow water-filled tube with an outer diameter of 25 nm and an inner diameter of 15 nM. Alpha-beta heterodimers associate head-to-tail to form protofilaments running lengthwise along the microtubule wall with the beta-tubulin subunit facing the microtubule plus end conferring a structural polarity. Microtubules usually have 13 protofilaments but different protofilament numbers can be found in some organisms and specialized cells. The cofactor is Mg(2+).

The protein resides in the cytoplasm. It is found in the cytoskeleton. Functionally, tubulin is the major constituent of microtubules, a cylinder consisting of laterally associated linear protofilaments composed of alpha- and beta-tubulin heterodimers. Microtubules grow by the addition of GTP-tubulin dimers to the microtubule end, where a stabilizing cap forms. Below the cap, tubulin dimers are in GDP-bound state, owing to GTPase activity of alpha-tubulin. The polypeptide is Tubulin beta-2 chain (TUBB2) (Triticum aestivum (Wheat)).